Here is a 603-residue protein sequence, read N- to C-terminus: Terpenoid synthase 22 (603 aa).

Residues aspartate 356, aspartate 360, asparagine 500, and glutamate 508 each contribute to the Mg(2+) site. Positions 356-360 match the DDXXD motif motif; sequence DDTCD.

It belongs to the terpene synthase family. Tpsa subfamily. Mg(2+) is required as a cofactor. Requires Mn(2+) as cofactor. Predominantly expressed in siliques but also in flowers.

The protein localises to the cytoplasm. It functions in the pathway secondary metabolite biosynthesis; terpenoid biosynthesis. Involved in terpene biosynthesis in roots. Possesses sesquiterpene (C15) synthase activity in vitro. Does not seem to be involved in diterpene (C20) biosynthesis. In Arabidopsis thaliana (Mouse-ear cress), this protein is Terpenoid synthase 22.